Reading from the N-terminus, the 600-residue chain is Sodium- and chloride-dependent betaine transporter (600 aa).

The interval 1-31 is disordered; sequence MGTSEHVPLPTDEAKAKELEQSQHSEEPDRG. At 1 to 38 the chain is on the cytoplasmic side; that stretch reads MGTSEHVPLPTDEAKAKELEQSQHSEEPDRGQWTGKFD. A compositionally biased stretch (basic and acidic residues) spans 12 to 30; sequence DEAKAKELEQSQHSEEPDR. 3 helical membrane-spanning segments follow: residues 39 to 59, 68 to 88, and 116 to 136; these read FLMSMVAYAVGLGNVWRFPYL, FLVVYMIFFCLAAVPIFLMEV, and VVIAFMCIAYFCVIVAWAMFY. Residues 137-207 are Extracellular-facing; it reads MISSIAWVFP…DTGDISEFGG (71 aa). Asn-165 carries an N-linked (GlcNAc...) asparagine glycan. 2 helical membrane passes run 208–228 and 237–257; these read IQWELFFIMAAAWLIVYFALW and FVYFCALFPYVLIFILLIRGL. A glycan (N-linked (GlcNAc...) asparagine) is linked at Asn-273. 7 helical membrane passes run 286 to 306, 321 to 341, 378 to 398, 420 to 440, 454 to 474, 499 to 519, and 536 to 556; these read AGTQVFYSYGVGFGALIALGS, MCFINGCTSITAGFAVFSILG, VFAVLFFLMITILGLDSQVCM, SLGIFCLFFFCIGIPMVTHSG, GYALLFVVFFEVVGLAYGFGA, FCAPATSLVLFVFCVVYYHPV, and WFLSSCSMVVIPGYAIYYLFF. Residues 557–600 are Cytoplasmic-facing; it reads TNKHLTLKERVRKGLNLDGSFESPAKKNLVNNAEELKFIESSSQ.

It belongs to the sodium:neurotransmitter symporter (SNF) family. Highly expressed in the head, the excretory canal, tail hypodermal cells, epidermis and vulval epithelial cells. Expressed in the excretory canal-associated neuron and in some non-amphidial sensory neurons in the head (at protein level).

The protein localises to the cell membrane. Functionally, betaine transporter dependent on Na(+) and Cl(-) ions that functions primarily in the epidermis to clear betaine from the extracellular space. Elicits current in response to betaine but not in response to GABA, L-carnitine, sarcosine, glycine or dimethylglycine. The polypeptide is Sodium- and chloride-dependent betaine transporter (Caenorhabditis elegans).